A 212-amino-acid chain; its full sequence is Peroxisomal membrane protein 4 (212 aa).

2 helical membrane passes run Gly97–Gly117 and Leu151–Phe171. Asn206 is a glycosylation site (N-linked (GlcNAc...) asparagine).

The protein belongs to the peroxisomal membrane protein PXMP2/4 family. Interacts with PEX19. Liver.

It localises to the peroxisome membrane. The chain is Peroxisomal membrane protein 4 (Pxmp4) from Rattus norvegicus (Rat).